We begin with the raw amino-acid sequence, 264 residues long: Undecaprenyl-diphosphatase (264 aa).

8 helical membrane-spanning segments follow: residues 1–21, 39–59, 83–103, 113–133, 143–163, 181–201, 220–240, and 244–264; these read MDIV…FLPI, QGLA…VFYF, STLV…GLAF, SGIV…LADK, VTIK…IPGV, VGSA…AGGL, LAAL…MSII, and SMTP…FIFV.

This sequence belongs to the UppP family.

The protein resides in the cell inner membrane. It catalyses the reaction di-trans,octa-cis-undecaprenyl diphosphate + H2O = di-trans,octa-cis-undecaprenyl phosphate + phosphate + H(+). Catalyzes the dephosphorylation of undecaprenyl diphosphate (UPP). Confers resistance to bacitracin. This Campylobacter curvus (strain 525.92) protein is Undecaprenyl-diphosphatase.